Reading from the N-terminus, the 153-residue chain is Superoxide dismutase [Cu-Zn] (153 aa).

Cu cation contacts are provided by His-45 and His-47. Thr-53 carries the phosphothreonine modification. A disulfide bond links Cys-56 and Cys-145. At Ser-59 the chain carries Phosphoserine. Cu cation is bound at residue His-62. Zn(2+) contacts are provided by His-62, His-70, His-79, and Asp-82. His-119 provides a ligand contact to Cu cation.

It belongs to the Cu-Zn superoxide dismutase family. Homodimer. Cu cation is required as a cofactor. It depends on Zn(2+) as a cofactor.

Its subcellular location is the cytoplasm. The catalysed reaction is 2 superoxide + 2 H(+) = H2O2 + O2. Functionally, destroys radicals which are normally produced within the cells and which are toxic to biological systems. The protein is Superoxide dismutase [Cu-Zn] of Drosophila melanogaster (Fruit fly).